Here is a 490-residue protein sequence, read N- to C-terminus: Cytochrome P450 monooxygenase anuE (490 aa).

Cys405 contributes to the heme binding site.

Belongs to the cytochrome P450 family. Requires heme as cofactor.

It catalyses the reaction 2-hydroxymethyl-3-pentylphenol + reduced [NADPH--hemoprotein reductase] + O2 = (8S)-annullatin E + oxidized [NADPH--hemoprotein reductase] + H2O + H(+). Its pathway is secondary metabolite biosynthesis. Functionally, cytochrome P450 monooxygenase; part of the gene cluster that mediates the biosynthesis of annullatin D, an alkylated aromatic polyketide with a fused dihydrobenzofuran lactone ring system that exhibits potent agonistic activities toward the cannabinoid receptors. Within the pathway, anuE catalyzes the hydroxylation of 2-hydroxymethyl-3-pentylphenol at the side chain to produce (8S)-annullatin E. The annullatin backbone 2-hydroxymethyl-3-pentylphenol is assembled from one acetyl-CoA starter unit and 5 malonyl-CoA elongation units by cooperation of the highly reducing polyketide synthase anuA, the short-chain dehydrogenase anuB and the oxidoreductase anuC, before being hydroxylated at the C-5 alkyl chain by the cytochrome P450 monooxygenase anuE to form (8S)-annullatin E. The prenyltransferase anuH subsequently installs one isoprenyl group at the benzene ring to form (8S)-annullatin J. Enzymatic or nonenzymatic dihydro-benzofuran ring formation between the prenyl and the phenolic hydroxyl groups in (8S)-annullatin J results in two diastereomers (2S,9S)-annullatin H and compound 12. The intermediate (2S,9S)-annullatin H is then converted to (2S,9S)-annullatin D by the FAD-linked oxidoreductase anuG-catalyzed five-member lactone ring formation. The isomer 12 acts as a substrate for the short-chain dehydrogenase anuF and is oxidized to (2R)-annullatin F, which is subsequently acetylated by an acetyltransferase leading to (2R)-annullatin G formation. The remaining enzymes identified within the cluster, anuD, anuI and anuJ, seem not to be involved in annullatin biosynthesis. In Penicillium roqueforti (strain FM164), this protein is Cytochrome P450 monooxygenase anuE.